The chain runs to 953 residues: Translation initiation factor IF-2 (953 aa).

Residues 53 to 368 are disordered; it reads AKKAVAGTSE…PVTERKFHEL (316 aa). Basic and acidic residues-rich tracts occupy residues 135-151 and 162-190; these read FKAE…ERRK and RNDR…RNRQ. Over residues 191–214 the composition is skewed to low complexity; sequence EQGNQHRNQGQSQYNQQRQSFNQG. The span at 236–266 shows a compositional bias: basic and acidic residues; sequence RSSEERFKQAKANKEALREQNKRKEQAKLED. A compositionally biased stretch (low complexity) spans 274-288; that stretch reads PKPTAKAPATPAPTA. The segment covering 301–318 has biased composition (basic and acidic residues); sequence ARPDKERDNFDHEEDGPR. The segment covering 332 to 341 has biased composition (low complexity); that stretch reads NQKNSNWNNN. The region spanning 455-622 is the tr-type G domain; the sequence is ERPPVVTIMG…TVLLVAEIQE (168 aa). Residues 464–471 are G1; that stretch reads GHVDHGKT. 464-471 serves as a coordination point for GTP; that stretch reads GHVDHGKT. The interval 489–493 is G2; sequence GITQH. Residues 510 to 513 are G3; sequence DTPG. GTP contacts are provided by residues 510–514 and 564–567; these read DTPGH and NKID. Positions 564–567 are G4; the sequence is NKID. A G5 region spans residues 600–602; that stretch reads SAK.

It belongs to the TRAFAC class translation factor GTPase superfamily. Classic translation factor GTPase family. IF-2 subfamily.

The protein resides in the cytoplasm. Functionally, one of the essential components for the initiation of protein synthesis. Protects formylmethionyl-tRNA from spontaneous hydrolysis and promotes its binding to the 30S ribosomal subunits. Also involved in the hydrolysis of GTP during the formation of the 70S ribosomal complex. This chain is Translation initiation factor IF-2, found in Streptococcus gordonii (strain Challis / ATCC 35105 / BCRC 15272 / CH1 / DL1 / V288).